The chain runs to 165 residues: 3-hydroxyacyl-[acyl-carrier-protein] dehydratase FERN, mitochondrial (165 aa).

Residues 1–35 (MLMKRLFSSSHVFSSSSASSNLLKIGSVLKQARTF) constitute a mitochondrion transit peptide. Positions 36–124 (ADDDVLGYSK…AVSIRQIKNK (89 aa)) constitute a MaoC-like domain.

As to quaternary structure, homodimer.

The protein resides in the mitochondrion. The catalysed reaction is a (3R)-hydroxyacyl-[ACP] = a (2E)-enoyl-[ACP] + H2O. It participates in lipid metabolism; fatty acid biosynthesis. 3-hydroxyl-[acyl-carrier-protein] (3-hydroxyl-ACP) dehydratase required for mitochondrial fatty acid synthesis (mtFAS). Essential for photorespiration, tomato morphogenesis and plant development, probably by influencing mitochondrial membrane lipid composition and other lipid metabolic pathways, and by contributing to energy supply and reactive oxygen species (ROS) homeostasis. In Solanum lycopersicum (Tomato), this protein is 3-hydroxyacyl-[acyl-carrier-protein] dehydratase FERN, mitochondrial.